The primary structure comprises 274 residues: Dermonecrotic toxin LcsSicTox-betaIC1 (274 aa).

Histidine 5 is a catalytic residue. Mg(2+) is bound by residues glutamate 25 and aspartate 27. The active-site Nucleophile is histidine 41. 2 cysteine pairs are disulfide-bonded: cysteine 45–cysteine 51 and cysteine 47–cysteine 190. Asparagine 66 is a glycosylation site (N-linked (GlcNAc...) asparagine). Aspartate 85 is a binding site for Mg(2+).

Belongs to the arthropod phospholipase D family. Class II subfamily. The cofactor is Mg(2+). As to expression, expressed by the venom gland.

The protein localises to the secreted. The enzyme catalyses an N-(acyl)-sphingosylphosphocholine = an N-(acyl)-sphingosyl-1,3-cyclic phosphate + choline. It catalyses the reaction an N-(acyl)-sphingosylphosphoethanolamine = an N-(acyl)-sphingosyl-1,3-cyclic phosphate + ethanolamine. It carries out the reaction a 1-acyl-sn-glycero-3-phosphocholine = a 1-acyl-sn-glycero-2,3-cyclic phosphate + choline. The catalysed reaction is a 1-acyl-sn-glycero-3-phosphoethanolamine = a 1-acyl-sn-glycero-2,3-cyclic phosphate + ethanolamine. Dermonecrotic toxins cleave the phosphodiester linkage between the phosphate and headgroup of certain phospholipids (sphingolipid and lysolipid substrates), forming an alcohol (often choline) and a cyclic phosphate. This toxin acts on sphingomyelin (SM). It may also act on ceramide phosphoethanolamine (CPE), lysophosphatidylcholine (LPC) and lysophosphatidylethanolamine (LPE), but not on lysophosphatidylserine (LPS), and lysophosphatidylglycerol (LPG). It acts by transphosphatidylation, releasing exclusively cyclic phosphate products as second products. Induces dermonecrosis, hemolysis, increased vascular permeability, edema, inflammatory response, and platelet aggregation. The sequence is that of Dermonecrotic toxin LcsSicTox-betaIC1 from Loxosceles cf. spinulosa (strain GJB-2008) (Recluse spider).